A 102-amino-acid chain; its full sequence is Protein ORF28 (102 aa).

Residues V28 to I48 form a helical membrane-spanning segment.

It is found in the host membrane. This chain is Protein ORF28 (ORF28), found in Homo sapiens (Human).